The following is a 328-amino-acid chain: Peroxidase 71 (328 aa).

Residues 1–23 form the signal peptide; it reads MGLVRSLCLLITFLNCLIISVHG. 4 disulfides stabilise this stretch: Cys44–Cys120, Cys77–Cys82, Cys126–Cys324, and Cys204–Cys235. His75 serves as the catalytic Proton acceptor. Ca(2+)-binding residues include Asp76, Val79, Gly81, Asp83, and Ser85. Residue Pro167 coordinates substrate. Heme b is bound at residue His197. Thr198 lines the Ca(2+) pocket. Residue Asn213 is glycosylated (N-linked (GlcNAc...) asparagine). Asp248, Ser251, and Asp256 together coordinate Ca(2+). N-linked (GlcNAc...) asparagine glycosylation is present at Asn262.

It belongs to the peroxidase family. Classical plant (class III) peroxidase subfamily. The cofactor is heme b. It depends on Ca(2+) as a cofactor. As to expression, slightly expressed in roots.

The protein resides in the secreted. The enzyme catalyses 2 a phenolic donor + H2O2 = 2 a phenolic radical donor + 2 H2O. In terms of biological role, removal of H(2)O(2), oxidation of toxic reductants, biosynthesis and degradation of lignin, suberization, auxin catabolism, response to environmental stresses such as wounding, pathogen attack and oxidative stress. These functions might be dependent on each isozyme/isoform in each plant tissue. The sequence is that of Peroxidase 71 (PER71) from Arabidopsis thaliana (Mouse-ear cress).